Reading from the N-terminus, the 144-residue chain is Ribonuclease H (144 aa).

Residues 1–136 (MKIVTLFSDG…CDQMARNEAL (136 aa)) form the RNase H type-1 domain. Mg(2+) is bound by residues Asp9, Glu47, Asp69, and Asp128.

The protein belongs to the RNase H family. In terms of assembly, monomer. It depends on Mg(2+) as a cofactor.

The protein localises to the cytoplasm. It catalyses the reaction Endonucleolytic cleavage to 5'-phosphomonoester.. Endonuclease that specifically degrades the RNA of RNA-DNA hybrids. This chain is Ribonuclease H, found in Campylobacter concisus (strain 13826).